Reading from the N-terminus, the 236-residue chain is 1-(5-phosphoribosyl)-5-[(5-phosphoribosylamino)methylideneamino] imidazole-4-carboxamide isomerase (236 aa).

D8 serves as the catalytic Proton acceptor. D129 serves as the catalytic Proton donor.

This sequence belongs to the HisA/HisF family.

Its subcellular location is the cytoplasm. It catalyses the reaction 1-(5-phospho-beta-D-ribosyl)-5-[(5-phospho-beta-D-ribosylamino)methylideneamino]imidazole-4-carboxamide = 5-[(5-phospho-1-deoxy-D-ribulos-1-ylimino)methylamino]-1-(5-phospho-beta-D-ribosyl)imidazole-4-carboxamide. The protein operates within amino-acid biosynthesis; L-histidine biosynthesis; L-histidine from 5-phospho-alpha-D-ribose 1-diphosphate: step 4/9. In Methanocorpusculum labreanum (strain ATCC 43576 / DSM 4855 / Z), this protein is 1-(5-phosphoribosyl)-5-[(5-phosphoribosylamino)methylideneamino] imidazole-4-carboxamide isomerase.